We begin with the raw amino-acid sequence, 260 residues long: tRNA (guanine-N(1)-)-methyltransferase (260 aa).

Residues G117 and L137 to L142 contribute to the S-adenosyl-L-methionine site.

This sequence belongs to the RNA methyltransferase TrmD family. In terms of assembly, homodimer.

The protein resides in the cytoplasm. The enzyme catalyses guanosine(37) in tRNA + S-adenosyl-L-methionine = N(1)-methylguanosine(37) in tRNA + S-adenosyl-L-homocysteine + H(+). Functionally, specifically methylates guanosine-37 in various tRNAs. This chain is tRNA (guanine-N(1)-)-methyltransferase, found in Cupriavidus necator (strain ATCC 17699 / DSM 428 / KCTC 22496 / NCIMB 10442 / H16 / Stanier 337) (Ralstonia eutropha).